Consider the following 110-residue polypeptide: Snake venom vascular endothelial growth factor toxin HF (110 aa).

Position 1 is a pyrrolidone carboxylic acid (Q1). Cystine bridges form between C14/C56, C45/C91, and C49/C93.

Belongs to the PDGF/VEGF growth factor family. Snake venom VEGF subfamily. Homodimer; disulfide-linked. Interacts with VEGF receptor-2 (KDR) with high affinity. In terms of tissue distribution, expressed by the venom gland.

Its subcellular location is the secreted. In terms of biological role, snake venom VEGFs that may contribute to venom dispersion and prey subjugation by inducing vascular permeability and hypotension. This protein induces an increase in capillary permeability after intradermal injection, as well as a drastic hypotensive effect after intravenous injection. The hypotension is mediated by nitric oxide (NO), which is produced by VEGF-activated endothelium NO synthase. Also induces angiogenesis in vitro, probably through VEGF receptor (KDR/VEGFR-2) signaling. In Vipera aspis aspis (Aspic viper), this protein is Snake venom vascular endothelial growth factor toxin HF.